We begin with the raw amino-acid sequence, 75 residues long: Serine rich endogenous peptide 4 (75 aa).

An N-terminal signal peptide occupies residues M1–A31. The disordered stretch occupies residues P51 to P75. Positions P61–P75 match the SCOOP motif motif. The short motif at S67 to S69 is the SxS motif essential for MIK2 binding element.

It belongs to the serine rich endogenous peptide (SCOOP) phytocytokine family. Interacts with MIK2 (via extracellular leucine-rich repeat domain); this interaction triggers the formation of complex between MIK2 and the BAK1/SERK3 and SERK4 coreceptors, and subsequent BAK1 activation by phosphorylation. As to expression, mostly expressed in leaves and seedlings shoots, and, to a lower extent, in roots, stems, siliques, seeds and flowers.

The protein localises to the cell membrane. It is found in the secreted. Its subcellular location is the extracellular space. It localises to the apoplast. Brassicaceae-specific phytocytokine (plant endogenous peptide released into the apoplast) perceived by MIK2 in a BAK1/SERK3 and SERK4 coreceptors-dependent manner, that modulates various physiological and antimicrobial processes including growth prevention and reactive oxygen species (ROS) response regulation. Inhibits root growth. Prevents general growth and development. Exhibits antibacterial effects against Pseudomonas syringae pv. tomato DC3000, Ralstonia solanacearum, Bacillus subtilis and Agrobacterium tumefaciens, thus being an antimicrobial peptide (AMP). The chain is Serine rich endogenous peptide 4 from Arabidopsis thaliana (Mouse-ear cress).